The primary structure comprises 81 residues: Photosystem I iron-sulfur center (81 aa).

2 consecutive 4Fe-4S ferredoxin-type domains span residues 2-31 (SHSV…MIPW) and 39-68 (IASA…VRVY). Residues C11, C14, C17, C21, C48, C51, C54, and C58 each contribute to the [4Fe-4S] cluster site.

As to quaternary structure, the eukaryotic PSI reaction center is composed of at least 11 subunits. It depends on [4Fe-4S] cluster as a cofactor.

It is found in the plastid. The protein resides in the chloroplast thylakoid membrane. It catalyses the reaction reduced [plastocyanin] + hnu + oxidized [2Fe-2S]-[ferredoxin] = oxidized [plastocyanin] + reduced [2Fe-2S]-[ferredoxin]. In terms of biological role, apoprotein for the two 4Fe-4S centers FA and FB of photosystem I (PSI); essential for photochemical activity. FB is the terminal electron acceptor of PSI, donating electrons to ferredoxin. The C-terminus interacts with PsaA/B/D and helps assemble the protein into the PSI complex. Required for binding of PsaD and PsaE to PSI. PSI is a plastocyanin-ferredoxin oxidoreductase, converting photonic excitation into a charge separation, which transfers an electron from the donor P700 chlorophyll pair to the spectroscopically characterized acceptors A0, A1, FX, FA and FB in turn. The polypeptide is Photosystem I iron-sulfur center (Triticum aestivum (Wheat)).